A 563-amino-acid polypeptide reads, in one-letter code: Putative solute carrier family 26 member 10P (563 aa).

The next 5 helical transmembrane spans lie at 45–65 (ALLA…PVLI), 75–91 (LSTG…GSAV), 116–136 (VGVA…MFVL), 152–172 (ALTS…LLGL), and 352–372 (LAGL…GPFF). The STAS domain maps to 406–541 (RVDFLLQVPG…VSVQDAAAYA (136 aa)).

This sequence belongs to the SLC26A/SulP transporter (TC 2.A.53) family.

It localises to the membrane. Functionally, chloride/bicarbonate exchanger. The sequence is that of Putative solute carrier family 26 member 10P (SLC26A10P) from Homo sapiens (Human).